A 220-amino-acid polypeptide reads, in one-letter code: Uracil phosphoribosyltransferase 2 (220 aa).

GTP is bound at residue 77 to 80; that stretch reads ARDI. Residues Arg-87 and Arg-113 each coordinate 5-phospho-alpha-D-ribose 1-diphosphate. Arg-134 lines the GTP pocket. Residues Asp-140 and 140–148 each bind 5-phospho-alpha-D-ribose 1-diphosphate; that span reads DPLLATGNS. Position 204 (Tyr-204) interacts with D-ribose 5-phosphate. Uracil contacts are provided by residues Val-205 and 210–212; that span reads GDF. Asp-211 contacts 5-phospho-alpha-D-ribose 1-diphosphate.

It belongs to the UPRTase family. Mg(2+) serves as cofactor.

The enzyme catalyses UMP + diphosphate = 5-phospho-alpha-D-ribose 1-diphosphate + uracil. It participates in pyrimidine metabolism; UMP biosynthesis via salvage pathway; UMP from uracil: step 1/1. With respect to regulation, allosterically activated by GTP. Catalyzes the conversion of uracil and 5-phospho-alpha-D-ribose 1-diphosphate (PRPP) to UMP and diphosphate. This Schizosaccharomyces pombe (strain 972 / ATCC 24843) (Fission yeast) protein is Uracil phosphoribosyltransferase 2.